A 364-amino-acid chain; its full sequence is Chorismate synthase (364 aa).

NADP(+) is bound by residues Arg-48 and Arg-54. FMN contacts are provided by residues 125-127 (RSS), 238-239 (NA), Gly-278, 293-297 (KPTSS), and Arg-319.

This sequence belongs to the chorismate synthase family. Homotetramer. The cofactor is FMNH2.

It carries out the reaction 5-O-(1-carboxyvinyl)-3-phosphoshikimate = chorismate + phosphate. Its pathway is metabolic intermediate biosynthesis; chorismate biosynthesis; chorismate from D-erythrose 4-phosphate and phosphoenolpyruvate: step 7/7. In terms of biological role, catalyzes the anti-1,4-elimination of the C-3 phosphate and the C-6 proR hydrogen from 5-enolpyruvylshikimate-3-phosphate (EPSP) to yield chorismate, which is the branch point compound that serves as the starting substrate for the three terminal pathways of aromatic amino acid biosynthesis. This reaction introduces a second double bond into the aromatic ring system. The chain is Chorismate synthase from Shewanella woodyi (strain ATCC 51908 / MS32).